Consider the following 630-residue polypeptide: MREYDAAHYDVIVVGAGHAGSEAALAAARMGRETLLLTINLDMVAFMPCNPSLGGPAKGIVVREIDALGGQMGRNIDKTYIQMRMLNTGKGPAVRALRAQADKHAYHRTMKRTIETTEHLTLRQGIAESLIVEDGVCKGIVTNTGARYSADSVILTAGTASRGKIIIGELTYSSGPNNSIPSIKLSESLEDNGFVLTRFKTGTPPRVDGTTIDFSKTEEQPGDKEPNHFSFETPDSAYLKDQLSCWMTYTNDTTHQVIRDNLDRAPMFTGVIEGVGPRYCPSIEDKIVRFADKPRHQIFLEPEGRETEEYYVGDFSTSMPEEIQHKMIHSIEGLENAQMMRPGYAIEYDVVEPWQLKPTLETKVVENLYTAGQMNGTSGYEEAAGQGLMAGINAALKQTGRDPFILDRSEAYIGVLIDDLVTKGTKEPYRLLTSRAEYRLMLRHDNADLRLTEKGHELGLINDDRFDSYEVKKAAVEAELARLEKIRLKPTPEIQAFLAAKGEAPLKDGVLASDFLKRPEVKYADLIQFIPAVEGIDNRVVEQVEIQVKYAGYIDKEKAKIAKLKRMEAKKIPANIDYDAIEGLATEGRQKLQKIQPETLAQASRIGGVNPADIGILSVYIQQGKIAKVK.

An FAD-binding site is contributed by 15-20 (GAGHAG). 276 to 290 (GPRYCPSIEDKIVRF) lines the NAD(+) pocket.

This sequence belongs to the MnmG family. As to quaternary structure, homodimer. Heterotetramer of two MnmE and two MnmG subunits. FAD serves as cofactor.

It is found in the cytoplasm. In terms of biological role, NAD-binding protein involved in the addition of a carboxymethylaminomethyl (cmnm) group at the wobble position (U34) of certain tRNAs, forming tRNA-cmnm(5)s(2)U34. This chain is tRNA uridine 5-carboxymethylaminomethyl modification enzyme MnmG, found in Latilactobacillus sakei subsp. sakei (strain 23K) (Lactobacillus sakei subsp. sakei).